Here is a 532-residue protein sequence, read N- to C-terminus: CTP synthase (532 aa).

Positions 1–267 (MTKYIFVTGG…DDIVLEHLQL (267 aa)) are amidoligase domain. CTP is bound at residue S13. S13 serves as a coordination point for UTP. Position 14–19 (14–19 (SIGKGI)) interacts with ATP. Y54 provides a ligand contact to L-glutamine. An ATP-binding site is contributed by D71. Mg(2+)-binding residues include D71 and E141. CTP-binding positions include 148–150 (DIE), 188–193 (KTKPTQ), and K224. Residues 188–193 (KTKPTQ) and K224 each bind UTP. Residues 292–532 (RIGLVGKYVS…DFVGAALKNK (241 aa)) form the Glutamine amidotransferase type-1 domain. Residue G354 coordinates L-glutamine. C381 serves as the catalytic Nucleophile; for glutamine hydrolysis. Residues 382–385 (LGMQ), E405, and R462 contribute to the L-glutamine site. Catalysis depends on residues H507 and E509.

Belongs to the CTP synthase family. Homotetramer.

It catalyses the reaction UTP + L-glutamine + ATP + H2O = CTP + L-glutamate + ADP + phosphate + 2 H(+). It carries out the reaction L-glutamine + H2O = L-glutamate + NH4(+). The enzyme catalyses UTP + NH4(+) + ATP = CTP + ADP + phosphate + 2 H(+). The protein operates within pyrimidine metabolism; CTP biosynthesis via de novo pathway; CTP from UDP: step 2/2. With respect to regulation, allosterically activated by GTP, when glutamine is the substrate; GTP has no effect on the reaction when ammonia is the substrate. The allosteric effector GTP functions by stabilizing the protein conformation that binds the tetrahedral intermediate(s) formed during glutamine hydrolysis. Inhibited by the product CTP, via allosteric rather than competitive inhibition. In terms of biological role, catalyzes the ATP-dependent amination of UTP to CTP with either L-glutamine or ammonia as the source of nitrogen. Regulates intracellular CTP levels through interactions with the four ribonucleotide triphosphates. The chain is CTP synthase from Listeria monocytogenes serovar 1/2a (strain ATCC BAA-679 / EGD-e).